Reading from the N-terminus, the 524-residue chain is Gamma-taxilin (524 aa).

Residues 1 to 10 (MATRLEEVTR) are compositionally biased toward basic and acidic residues. 2 disordered regions span residues 1–37 (MATRLEEVTRGRGGGTEEASEGGRGGRRRSPPQKFEI) and 64–86 (LQHQDPSCGGTTKKHSLEGDEGS). An omega-N-methylarginine mark is found at Arg-12 and Arg-24. 3 positions are modified to phosphoserine: Ser-79, Ser-86, and Ser-97. The span at 106 to 115 (REEIPGREAR) shows a compositional bias: basic and acidic residues. A disordered region spans residues 106 to 130 (REEIPGREARTGPPDGQQDSECSRN). Residues 153–465 (EEKLAALCKK…KEQVSIKAAD (313 aa)) are a coiled coil. Tyr-283 bears the Phosphotyrosine mark. The interval 501 to 524 (VCEKSAAQKPSSSGSPAQGIESVD) is disordered. At Ser-512 the chain carries Phosphoserine.

The protein belongs to the taxilin family. In terms of assembly, binds to the C-terminal coiled coil region of syntaxin family members STX1A, STX3A and STX4A. Forms a heterodimer with ATF4 in osteoblasts.

The protein resides in the nucleus membrane. Its subcellular location is the cytoplasm. It is found in the cytosol. Functionally, may be involved in intracellular vesicle traffic. Inhibits ATF4-mediated transcription, possibly by dimerizing with ATF4 to form inactive dimers that cannot bind DNA. May be involved in regulating bone mass density through an ATF4-dependent pathway. May be involved in cell cycle progression. The polypeptide is Gamma-taxilin (Txlng) (Mus musculus (Mouse)).